A 98-amino-acid chain; its full sequence is Essential MCU regulator, mitochondrial (98 aa).

Residues 52–72 (ITPFGLFGIIATVIPGLLIGA) traverse the membrane as a helical segment.

The protein belongs to the SMDT1/EMRE family.

The protein localises to the mitochondrion inner membrane. Essential regulatory subunit of the mitochondrial calcium uniporter (mcu) channel, a protein that mediates calcium uptake into mitochondria. The protein is Essential MCU regulator, mitochondrial of Anopheles gambiae (African malaria mosquito).